Consider the following 788-residue polypeptide: MKKRFPTLLATLIWTALYSQHTLADLAEQCMLGVPTYDQPLVTGDPNQLPVRINADKTEANYPDNALFTGNVIVQQGNSTLTANQVELTQVQKPGEAIPVRTVTATGDVNYDDPQIKLKGPKGWSNLNTKDTDMDKGKYQMVGRQGRGDADLMKLRGQNRYTILENGTFTSCLPGDNSWSVVGSEVIHDREEQVAEIWNARFKIGKVPVFYSPYMQLPVGDKRRSGFLIPNAKYTSNNGLEFMLPYYWNIAPNFDATITPHYMERRGLQWQNEFRYLLAPGSGTMALDWLPSDRLYHGTDGTEKDPTRWLYYWGHSGVMDKVWRFNVNYTRVSDPDYFTDLTSQYGSTTDGYATQIFSVGYADQNWDATLASKQFQVFTTGGNNNAYRAQPQLDMNYYKNDIGPFDLHIYGQAAKFTSVNPENPEAERFHIEPSINLPLANGWGSLNTEAKLLATHYQQDIPNGFASNYKNQNGQDATVPNLKDSVNRVIPQFKVDGKVVFDRPMDWSEGFTQTLEPRVQYLYVPYRNQDDIYIYDTTLMQSDYSGLFRDRTYSGLDRIASANQVSTGLTSRIYDDELVERFNVSVGQIYYFSRSRTGNSETIDNSDDTGSLVWAGDTFWRINDQLGLKGGAQYDTRLGSLTLGNAVMEYRKDAERMIQLNYRYASPEYIQAAVPNVKSPGYQQGISQIGTTASWPIADRWALVGAYYYDTKANQPASQLVGVQYNTCCWAINLGYERKITGWNNQNETSKYDNKVSFNIELRGLSSDHSLGTAQMLGSGILPYQSAF.

The signal sequence occupies residues 1 to 24 (MKKRFPTLLATLIWTALYSQHTLA).

It belongs to the LptD family. As to quaternary structure, component of the lipopolysaccharide transport and assembly complex. Interacts with LptE and LptA.

It localises to the cell outer membrane. In terms of biological role, together with LptE, is involved in the assembly of lipopolysaccharide (LPS) at the surface of the outer membrane. This is LPS-assembly protein LptD from Yersinia enterocolitica serotype O:8 / biotype 1B (strain NCTC 13174 / 8081).